The following is a 253-amino-acid chain: Major prion protein (253 aa).

The N-terminal stretch at methionine 1–cysteine 22 is a signal peptide. The segment at lysine 23–serine 230 is interaction with GRB2, ERI3 and SYN1. Positions proline 26–asparagine 108 are disordered. 5 consecutive repeat copies span residues proline 51–glutamine 59, proline 60–glutamine 67, proline 68–glutamine 75, proline 76–glutamine 83, and proline 84–glutamine 91. The segment at proline 51–glutamine 91 is 5 X 8 AA tandem repeats of P-H-G-G-G-W-G-Q. The segment covering glutamine 52–threonine 95 has biased composition (gly residues). Positions 61, 62, 63, 69, 70, 71, 77, 78, 79, 85, 86, and 87 each coordinate Cu(2+). Cysteines 179 and 214 form a disulfide. N-linked (GlcNAc...) asparagine glycosylation is found at asparagine 181 and asparagine 197. A lipid anchor (GPI-anchor amidated serine) is attached at serine 230. A propeptide spans serine 231–glycine 253 (removed in mature form).

Belongs to the prion family. In terms of assembly, monomer and homodimer. Has a tendency to aggregate into amyloid fibrils containing a cross-beta spine, formed by a steric zipper of superposed beta-strands. Soluble oligomers may represent an intermediate stage on the path to fibril formation. Copper binding may promote oligomerization. Interacts with GRB2, APP, ERI3/PRNPIP and SYN1. Mislocalized cytosolically exposed PrP interacts with MGRN1; this interaction alters MGRN1 subcellular location and causes lysosomal enlargement. Interacts with KIAA1191.

Its subcellular location is the cell membrane. The protein resides in the golgi apparatus. Its function is as follows. Its primary physiological function is unclear. Has cytoprotective activity against internal or environmental stresses. May play a role in neuronal development and synaptic plasticity. May be required for neuronal myelin sheath maintenance. May play a role in iron uptake and iron homeostasis. Soluble oligomers are toxic to cultured neuroblastoma cells and induce apoptosis (in vitro). Association with GPC1 (via its heparan sulfate chains) targets PRNP to lipid rafts. Also provides Cu(2+) or Zn(2+) for the ascorbate-mediated GPC1 deaminase degradation of its heparan sulfate side chains. The protein is Major prion protein (PRNP) of Hylobates lar (Lar gibbon).